The following is a 199-amino-acid chain: Adenylyl-sulfate kinase (199 aa).

34–41 (GLSGSGKS) serves as a coordination point for ATP. The active-site Phosphoserine intermediate is serine 108.

It belongs to the APS kinase family.

It catalyses the reaction adenosine 5'-phosphosulfate + ATP = 3'-phosphoadenylyl sulfate + ADP + H(+). Its pathway is sulfur metabolism; hydrogen sulfide biosynthesis; sulfite from sulfate: step 2/3. In terms of biological role, catalyzes the synthesis of activated sulfate. The protein is Adenylyl-sulfate kinase of Oceanobacillus iheyensis (strain DSM 14371 / CIP 107618 / JCM 11309 / KCTC 3954 / HTE831).